Here is a 228-residue protein sequence, read N- to C-terminus: Cytochrome c oxidase subunit 2 (228 aa).

Residues 1 to 14 (MANHSQLGFQDASS) lie on the Mitochondrial intermembrane side of the membrane. Residues 15–45 (PIMEELVEFHDHALIVALAICSLVLYLLAHM) form a helical membrane-spanning segment. Residues 46 to 58 (LMEKLSSNAVDAQ) lie on the Mitochondrial matrix side of the membrane. The chain crosses the membrane as a helical span at residues 59–86 (EVELIWTILPAIVLVLLALPSLQILYMM). Residues 87–228 (DEIDEPDLTL…EAWSSLLSSS (142 aa)) lie on the Mitochondrial intermembrane side of the membrane. Residues histidine 160, cysteine 195, glutamate 197, cysteine 199, histidine 203, and methionine 206 each contribute to the Cu cation site. Glutamate 197 contributes to the Mg(2+) binding site.

It belongs to the cytochrome c oxidase subunit 2 family. As to quaternary structure, component of the cytochrome c oxidase (complex IV, CIV), a multisubunit enzyme composed of 14 subunits. The complex is composed of a catalytic core of 3 subunits MT-CO1, MT-CO2 and MT-CO3, encoded in the mitochondrial DNA, and 11 supernumerary subunits COX4I, COX5A, COX5B, COX6A, COX6B, COX6C, COX7A, COX7B, COX7C, COX8 and NDUFA4, which are encoded in the nuclear genome. The complex exists as a monomer or a dimer and forms supercomplexes (SCs) in the inner mitochondrial membrane with NADH-ubiquinone oxidoreductase (complex I, CI) and ubiquinol-cytochrome c oxidoreductase (cytochrome b-c1 complex, complex III, CIII), resulting in different assemblies (supercomplex SCI(1)III(2)IV(1) and megacomplex MCI(2)III(2)IV(2)). Found in a complex with TMEM177, COA6, COX18, COX20, SCO1 and SCO2. Interacts with TMEM177 in a COX20-dependent manner. Interacts with COX20. Interacts with COX16. Cu cation is required as a cofactor.

Its subcellular location is the mitochondrion inner membrane. The catalysed reaction is 4 Fe(II)-[cytochrome c] + O2 + 8 H(+)(in) = 4 Fe(III)-[cytochrome c] + 2 H2O + 4 H(+)(out). In terms of biological role, component of the cytochrome c oxidase, the last enzyme in the mitochondrial electron transport chain which drives oxidative phosphorylation. The respiratory chain contains 3 multisubunit complexes succinate dehydrogenase (complex II, CII), ubiquinol-cytochrome c oxidoreductase (cytochrome b-c1 complex, complex III, CIII) and cytochrome c oxidase (complex IV, CIV), that cooperate to transfer electrons derived from NADH and succinate to molecular oxygen, creating an electrochemical gradient over the inner membrane that drives transmembrane transport and the ATP synthase. Cytochrome c oxidase is the component of the respiratory chain that catalyzes the reduction of oxygen to water. Electrons originating from reduced cytochrome c in the intermembrane space (IMS) are transferred via the dinuclear copper A center (CU(A)) of subunit 2 and heme A of subunit 1 to the active site in subunit 1, a binuclear center (BNC) formed by heme A3 and copper B (CU(B)). The BNC reduces molecular oxygen to 2 water molecules using 4 electrons from cytochrome c in the IMS and 4 protons from the mitochondrial matrix. This is Cytochrome c oxidase subunit 2 (MT-CO2) from Anas platyrhynchos (Mallard).